A 92-amino-acid polypeptide reads, in one-letter code: Protein S100-B (92 aa).

The residue at position 2 (Ser2) is an N-acetylserine. EF-hand domains follow at residues 13-48 (DVFH…LEEI) and 49-84 (KEQE…VTTA). His16 is a Zn(2+) binding site. The Ca(2+) site is built by Ser19 and Glu22. His26 contributes to the Zn(2+) binding site. Residues Lys27, Glu32, Asp62, Asp64, Asp66, Glu68, and Glu73 each coordinate Ca(2+). Zn(2+) contacts are provided by His86 and His91.

Belongs to the S-100 family. In terms of assembly, dimer of either two alpha chains, or two beta chains, or one alpha and one beta chain. The S100B dimer binds two molecules of STK38. Interacts with CACYBP in a calcium-dependent manner. Interacts with ATAD3A; this interaction probably occurs in the cytosol prior to ATAD3A mitochondrial targeting. Interacts with S100A6. The S100B dimer interacts with two molecules of CAPZA1. Interacts with AGER. Interacts with PPP5C (via TPR repeats); the interaction is calcium-dependent and modulates PPP5C activity. Interacts with TPPP; this interaction inhibits TPPP dimerization. Interacts with isoform CLSTN3beta of CLSTN3; interaction promotes secretion. Although predominant among the water-soluble brain proteins, S100 is also found in a variety of other tissues.

It localises to the cytoplasm. Its subcellular location is the nucleus. The protein localises to the secreted. Functionally, small zinc- and- and calcium-binding protein that is highly expressed in astrocytes and constitutes one of the most abundant soluble proteins in brain. Weakly binds calcium but binds zinc very tightly-distinct binding sites with different affinities exist for both ions on each monomer. Physiological concentrations of potassium ion antagonize the binding of both divalent cations, especially affecting high-affinity calcium-binding sites. Acts as a neurotrophic factor that promotes astrocytosis and axonal proliferation. Involved in innervation of thermogenic adipose tissue by acting as an adipocyte-derived neurotrophic factor that promotes sympathetic innervation of adipose tissue. Binds to and initiates the activation of STK38 by releasing autoinhibitory intramolecular interactions within the kinase. Interaction with AGER after myocardial infarction may play a role in myocyte apoptosis by activating ERK1/2 and p53/TP53 signaling. Could assist ATAD3A cytoplasmic processing, preventing aggregation and favoring mitochondrial localization. May mediate calcium-dependent regulation on many physiological processes by interacting with other proteins, such as TPR-containing proteins, and modulating their activity. The polypeptide is Protein S100-B (Rattus norvegicus (Rat)).